The chain runs to 313 residues: Ribose-phosphate pyrophosphokinase (313 aa).

Residues D37–E39 and R96–Q97 each bind ATP. Residues H131 and D170 each coordinate Mg(2+). The active site involves K193. Residues R195, D219, and D223 to T227 each bind D-ribose 5-phosphate.

This sequence belongs to the ribose-phosphate pyrophosphokinase family. Class I subfamily. Homohexamer. Mg(2+) serves as cofactor.

Its subcellular location is the cytoplasm. It catalyses the reaction D-ribose 5-phosphate + ATP = 5-phospho-alpha-D-ribose 1-diphosphate + AMP + H(+). It functions in the pathway metabolic intermediate biosynthesis; 5-phospho-alpha-D-ribose 1-diphosphate biosynthesis; 5-phospho-alpha-D-ribose 1-diphosphate from D-ribose 5-phosphate (route I): step 1/1. Involved in the biosynthesis of the central metabolite phospho-alpha-D-ribosyl-1-pyrophosphate (PRPP) via the transfer of pyrophosphoryl group from ATP to 1-hydroxyl of ribose-5-phosphate (Rib-5-P). In Pseudomonas putida (strain ATCC 47054 / DSM 6125 / CFBP 8728 / NCIMB 11950 / KT2440), this protein is Ribose-phosphate pyrophosphokinase.